The primary structure comprises 406 residues: MLSPAPEEPLLLAELKPGRPHQFDWKSSCETWSVAFSPDGSWFAWSQGHCIVKLIPWPLEEQFIPKGFEAKSRSSKNETKGRGSPKEKTLDCGQIVWGLAFSPWPSPPSKKLWARHHPQVPDVSCLILATGLNDGQIKIWEVQTGLLLLNLSGHQDVVRDLSFTPSGSLILVSASRDKTLRIWDLNKHGKQIQVLSGHLQWVYCCSISPDCSMLCSAAGEKSVFLWSMRSYTLIRKLEGHQSSVVSCDFSPDSALLVTASYDTNVIMWDPYTGERLRSLHHTQLNPPMDDSDVHISSLRSVCFSPEGLYLATVADDRLLRIWALELKTPIAFAPMTNGLCCTFFPHGGVIATGTRDGHVQFWTAPRVLSSLKHLCRKALRSFLTTYQVLALPIPKKMKEFLTYRTF.

A disordered region spans residues Ala-70–Thr-89. 5 WD repeats span residues Pro-107 to Asn-150, Gly-153 to Gln-193, Gly-197 to Lys-236, Gly-239 to Ser-278, and Val-293 to Phe-332. Residues His-358 to Phe-406 form the SOCS box domain.

Its pathway is protein modification; protein ubiquitination. May be a substrate-recognition component of a SCF-like ECS (Elongin-Cullin-SOCS-box protein) E3 ubiquitin ligase complex which mediates the ubiquitination and subsequent proteasomal degradation of target proteins. The polypeptide is WD repeat and SOCS box-containing protein 2 (WSB2) (Bos taurus (Bovine)).